Here is a 566-residue protein sequence, read N- to C-terminus: Putative sulfite reductase [NADPH] hemoprotein beta-component (566 aa).

[4Fe-4S] cluster contacts are provided by Cys430, Cys436, Cys475, and Cys479. Cys479 lines the siroheme pocket.

It belongs to the nitrite and sulfite reductase 4Fe-4S domain family. As to quaternary structure, alpha(8)-beta(8). The alpha component is a flavoprotein, the beta component is a hemoprotein. Siroheme is required as a cofactor. It depends on [4Fe-4S] cluster as a cofactor.

It catalyses the reaction hydrogen sulfide + 3 NADP(+) + 3 H2O = sulfite + 3 NADPH + 4 H(+). The protein operates within sulfur metabolism; hydrogen sulfide biosynthesis; hydrogen sulfide from sulfite (NADPH route): step 1/1. Component of the sulfite reductase complex that catalyzes the 6-electron reduction of sulfite to sulfide. This is one of several activities required for the biosynthesis of L-cysteine from sulfate. The sequence is that of Putative sulfite reductase [NADPH] hemoprotein beta-component from Buchnera aphidicola subsp. Schizaphis graminum (strain Sg).